Here is a 90-residue protein sequence, read N- to C-terminus: Barrier-to-autointegration factor B (90 aa).

The protein belongs to the BAF family. As to quaternary structure, homodimer. Interacts with nemp1a and nemp1b.

The protein localises to the nucleus. The protein resides in the chromosome. It is found in the nucleus envelope. Its subcellular location is the cytoplasm. In terms of biological role, non-specific DNA-binding protein that plays key roles in mitotic nuclear reassembly, chromatin organization, DNA damage response, gene expression and intrinsic immunity against foreign DNA. Contains two non-specific double-stranded DNA (dsDNA)-binding sites which promote DNA cross-bridging. Plays a key role in nuclear membrane reformation at the end of mitosis by driving formation of a single nucleus in a spindle-independent manner. Transiently cross-bridges anaphase chromosomes via its ability to bridge distant DNA sites, leading to the formation of a dense chromatin network at the chromosome ensemble surface that limits membranes to the surface. Also acts as a negative regulator of innate immune activation by restricting CGAS activity toward self-DNA upon acute loss of nuclear membrane integrity. Outcompetes CGAS for DNA-binding, thereby preventing CGAS activation and subsequent damaging autoinflammatory responses. Also involved in DNA damage response; acts by inhibiting the ADP-ribosyltransferase activity of PARP1. Involved in the recognition of exogenous dsDNA in the cytosol: associates with exogenous dsDNA immediately after its appearance in the cytosol at endosome breakdown and is required to avoid autophagy. The sequence is that of Barrier-to-autointegration factor B (banf1-b) from Xenopus laevis (African clawed frog).